We begin with the raw amino-acid sequence, 428 residues long: Histidinol dehydrogenase (428 aa).

NAD(+) contacts are provided by Tyr127, Gln185, and Asn208. Substrate-binding residues include Ser234, Gln256, and His259. Residues Gln256 and His259 each contribute to the Zn(2+) site. Catalysis depends on proton acceptor residues Glu323 and His324. 4 residues coordinate substrate: His324, Asp357, Glu411, and His416. Residue Asp357 participates in Zn(2+) binding. His416 contributes to the Zn(2+) binding site.

Belongs to the histidinol dehydrogenase family. It depends on Zn(2+) as a cofactor.

It catalyses the reaction L-histidinol + 2 NAD(+) + H2O = L-histidine + 2 NADH + 3 H(+). Its pathway is amino-acid biosynthesis; L-histidine biosynthesis; L-histidine from 5-phospho-alpha-D-ribose 1-diphosphate: step 9/9. In terms of biological role, catalyzes the sequential NAD-dependent oxidations of L-histidinol to L-histidinaldehyde and then to L-histidine. This chain is Histidinol dehydrogenase, found in Mannheimia succiniciproducens (strain KCTC 0769BP / MBEL55E).